A 446-amino-acid chain; its full sequence is Rhoptry surface protein CERLI1 (446 aa).

A C2 domain is found at 39 to 208 (KPIGQLYRLM…NQTKNNEKIE (170 aa)). Positions 252–363 (GYLLHSNFYI…ILVSNYKRER (112 aa)) constitute a PH domain.

The protein resides in the cytoplasmic vesicle. It localises to the secretory vesicle. It is found in the rhoptry membrane. Functionally, essential for merozoite invasion of host cells by controlling rhoptry secretion. Binds to phosphatidic acid (PA) and phosphatidylinositol 4,5-bisphosphate (PIP2) lipids and thus, likely contributes to the assembly of the machinery that docks or primes the rhoptry to the parasite cell membrane prior to the fusion with the host cell membrane. This Plasmodium falciparum (isolate 3D7) protein is Rhoptry surface protein CERLI1.